A 431-amino-acid chain; its full sequence is D-tagatose-1,6-bisphosphate aldolase subunit KbaZ (431 aa).

Belongs to the GatZ/KbaZ family. KbaZ subfamily. Forms a complex with KbaY.

Its pathway is carbohydrate metabolism; D-tagatose 6-phosphate degradation; D-glyceraldehyde 3-phosphate and glycerone phosphate from D-tagatose 6-phosphate: step 2/2. Functionally, component of the tagatose-1,6-bisphosphate aldolase KbaYZ that is required for full activity and stability of the Y subunit. Could have a chaperone-like function for the proper and stable folding of KbaY. When expressed alone, KbaZ does not show any aldolase activity. The chain is D-tagatose-1,6-bisphosphate aldolase subunit KbaZ from Salmonella arizonae (strain ATCC BAA-731 / CDC346-86 / RSK2980).